Here is a 413-residue protein sequence, read N- to C-terminus: Synaptosomal-associated protein 47 (413 aa).

The t-SNARE coiled-coil homology 1 domain occupies 109–171 (AANIPSHVTR…DVADRLLTEL (63 aa)). Residues 321–342 (RHAASRPKGCTPHRELPTGGQE) are disordered. A t-SNARE coiled-coil homology 2 domain is found at 350 to 412 (KNLPLFSEGE…DKQNRRMRKL (63 aa)).

This sequence belongs to the SVAP1 family. As to quaternary structure, associates with the BLOC-1 complex. Interacts with BLOC1S6. Forms a complex containing SNAP47, VAMP2 and STX1A. In terms of tissue distribution, ubiquitously expressed with the most abundant expression in the brain. In brain, most highly expressed in the glomerular layer of the olfactory bulb, the cortex, striatum, hippocampus, and colliculi (at protein level).

The protein resides in the endomembrane system. Its subcellular location is the cytoplasm. The protein localises to the perinuclear region. In terms of biological role, may play a role in intracellular membrane fusion. This chain is Synaptosomal-associated protein 47 (Snap47), found in Mus musculus (Mouse).